A 389-amino-acid polypeptide reads, in one-letter code: S-adenosylmethionine synthase (389 aa).

Histidine 15 lines the ATP pocket. Aspartate 17 is a binding site for Mg(2+). Glutamate 43 provides a ligand contact to K(+). L-methionine is bound by residues glutamate 56 and glutamine 99. Positions glutamine 99–histidine 109 are flexible loop. ATP is bound by residues aspartate 166–lysine 168, arginine 232–phenylalanine 233, aspartate 241, arginine 247–lysine 248, serine 264, and lysine 268. Aspartate 241 is a binding site for L-methionine. An L-methionine-binding site is contributed by lysine 272.

This sequence belongs to the AdoMet synthase family. In terms of assembly, homotetramer; dimer of dimers. Mg(2+) serves as cofactor. Requires K(+) as cofactor.

Its subcellular location is the cytoplasm. The catalysed reaction is L-methionine + ATP + H2O = S-adenosyl-L-methionine + phosphate + diphosphate. The protein operates within amino-acid biosynthesis; S-adenosyl-L-methionine biosynthesis; S-adenosyl-L-methionine from L-methionine: step 1/1. Functionally, catalyzes the formation of S-adenosylmethionine (AdoMet) from methionine and ATP. The overall synthetic reaction is composed of two sequential steps, AdoMet formation and the subsequent tripolyphosphate hydrolysis which occurs prior to release of AdoMet from the enzyme. This is S-adenosylmethionine synthase from Blochmanniella pennsylvanica (strain BPEN).